A 466-amino-acid chain; its full sequence is Purple acid phosphatase 6 (466 aa).

Positions 1 to 20 are cleaved as a signal peptide; that stretch reads MKNLVIFAFLFLSITTVING. An N-linked (GlcNAc...) asparagine glycan is attached at Asn-88. Asp-164 serves as a coordination point for Fe cation. Asn-172 is a glycosylation site (N-linked (GlcNAc...) asparagine). Fe cation-binding residues include Asp-192 and Tyr-195. Asp-192 is a binding site for Zn(2+). Residues Asn-229 and His-314 each coordinate Zn(2+). Asn-229 is a binding site for substrate. His-324 acts as the Proton donor in catalysis. His-351 lines the Zn(2+) pocket. 351–353 lines the substrate pocket; it reads HVH. Residue His-353 participates in Fe cation binding. 2 N-linked (GlcNAc...) asparagine glycosylation sites follow: Asn-367 and Asn-424.

It belongs to the metallophosphoesterase superfamily. Purple acid phosphatase family. Homodimer. It depends on Fe cation as a cofactor. The cofactor is Zn(2+). As to expression, specifically expressed in flowers.

Its subcellular location is the secreted. The catalysed reaction is a phosphate monoester + H2O = an alcohol + phosphate. In Arabidopsis thaliana (Mouse-ear cress), this protein is Purple acid phosphatase 6 (PAP6).